Reading from the N-terminus, the 126-residue chain is Small ribosomal subunit protein uS13 (126 aa).

Residues 95–126 (GLPVRGQQTRTNARTRKGKRKTVGGTKKAKAK) form a disordered region. A compositionally biased stretch (basic residues) spans 107–126 (ARTRKGKRKTVGGTKKAKAK).

This sequence belongs to the universal ribosomal protein uS13 family. In terms of assembly, part of the 30S ribosomal subunit. Forms a loose heterodimer with protein S19. Forms two bridges to the 50S subunit in the 70S ribosome.

In terms of biological role, located at the top of the head of the 30S subunit, it contacts several helices of the 16S rRNA. In the 70S ribosome it contacts the 23S rRNA (bridge B1a) and protein L5 of the 50S subunit (bridge B1b), connecting the 2 subunits; these bridges are implicated in subunit movement. Contacts the tRNAs in the A and P-sites. This chain is Small ribosomal subunit protein uS13, found in Aquifex aeolicus (strain VF5).